The primary structure comprises 395 residues: MNENNDDINNLNTPCVLVLDSVVRNNCIKMNERAASLGVNVRPHMKTHKTIEIGKYQFEENKNLNKSRGIIVSTLSEGKFFSKEFKDILYATPIAPNKVKDAYQLHLSIDRLNVMFDNIEHLKSMVDYAIKNPNEFQKKWSVFLKIDCGYHRAGADPKLQSTTDLVELIVNGEYNQYFQFQGIYSHSGHSYKCQTPTDIKNLAIEEARVTGDYGKKLKSLGYKVDTVSIGSTPVCSHLPHNLLSEYGVNEIHPGNYTFYDQMQYELGNCKLEDIGVHVLATIVSIYPERNELLVDAGSLALSSDPGCTHLRDLKVINNFGIVYNDTNLRIVAPSQEVSKIQSTNQSPIDFSKYKIGSKIRIIPNHSCLTAAMFSDYHVINNDNQIINSFKPNKHW.

At Lys46 the chain carries N6-(pyridoxal phosphate)lysine. Positions 184, 191, 232, 254, and 255 each coordinate pyridoxal 5'-phosphate. Residues His365 and Cys367 each coordinate Zn(2+).

This sequence belongs to the DSD1 family. It depends on pyridoxal 5'-phosphate as a cofactor. The cofactor is Zn(2+).

It carries out the reaction D-serine = pyruvate + NH4(+). In terms of biological role, catalyzes the conversion of D-serine to pyruvate and ammonia. Plays a role in D-serine detoxification. This Dictyostelium discoideum (Social amoeba) protein is D-serine dehydratase.